A 343-amino-acid polypeptide reads, in one-letter code: Phosphoribosylformylglycinamidine cyclo-ligase (343 aa).

This sequence belongs to the AIR synthase family.

It localises to the cytoplasm. It catalyses the reaction 2-formamido-N(1)-(5-O-phospho-beta-D-ribosyl)acetamidine + ATP = 5-amino-1-(5-phospho-beta-D-ribosyl)imidazole + ADP + phosphate + H(+). It functions in the pathway purine metabolism; IMP biosynthesis via de novo pathway; 5-amino-1-(5-phospho-D-ribosyl)imidazole from N(2)-formyl-N(1)-(5-phospho-D-ribosyl)glycinamide: step 2/2. This Thermodesulfovibrio yellowstonii (strain ATCC 51303 / DSM 11347 / YP87) protein is Phosphoribosylformylglycinamidine cyclo-ligase.